The following is a 178-amino-acid chain: Large ribosomal subunit protein uL6 (178 aa).

Belongs to the universal ribosomal protein uL6 family. As to quaternary structure, part of the 50S ribosomal subunit.

In terms of biological role, this protein binds to the 23S rRNA, and is important in its secondary structure. It is located near the subunit interface in the base of the L7/L12 stalk, and near the tRNA binding site of the peptidyltransferase center. In Campylobacter lari (strain RM2100 / D67 / ATCC BAA-1060), this protein is Large ribosomal subunit protein uL6.